A 250-amino-acid polypeptide reads, in one-letter code: Ubiquinone/menaquinone biosynthesis C-methyltransferase UbiE (250 aa).

S-adenosyl-L-methionine contacts are provided by residues Thr-73, Asp-94, 122–123 (NA), and Ser-139.

It belongs to the class I-like SAM-binding methyltransferase superfamily. MenG/UbiE family.

It catalyses the reaction a 2-demethylmenaquinol + S-adenosyl-L-methionine = a menaquinol + S-adenosyl-L-homocysteine + H(+). The enzyme catalyses a 2-methoxy-6-(all-trans-polyprenyl)benzene-1,4-diol + S-adenosyl-L-methionine = a 5-methoxy-2-methyl-3-(all-trans-polyprenyl)benzene-1,4-diol + S-adenosyl-L-homocysteine + H(+). Its pathway is quinol/quinone metabolism; menaquinone biosynthesis; menaquinol from 1,4-dihydroxy-2-naphthoate: step 2/2. It functions in the pathway cofactor biosynthesis; ubiquinone biosynthesis. In terms of biological role, methyltransferase required for the conversion of demethylmenaquinol (DMKH2) to menaquinol (MKH2) and the conversion of 2-polyprenyl-6-methoxy-1,4-benzoquinol (DDMQH2) to 2-polyprenyl-3-methyl-6-methoxy-1,4-benzoquinol (DMQH2). The sequence is that of Ubiquinone/menaquinone biosynthesis C-methyltransferase UbiE from Francisella philomiragia subsp. philomiragia (strain ATCC 25017 / CCUG 19701 / FSC 153 / O#319-036).